Here is a 281-residue protein sequence, read N- to C-terminus: Light-independent protochlorophyllide reductase iron-sulfur ATP-binding protein (281 aa).

Residues 10 to 15 and K39 contribute to the ATP site; that span reads GIGKST. S14 is a binding site for Mg(2+). Residues C95 and C129 each contribute to the [4Fe-4S] cluster site. 180–181 lines the ATP pocket; it reads NR.

Belongs to the NifH/BchL/ChlL family. As to quaternary structure, homodimer. Protochlorophyllide reductase is composed of three subunits; ChlL, ChlN and ChlB. [4Fe-4S] cluster is required as a cofactor.

It carries out the reaction chlorophyllide a + oxidized 2[4Fe-4S]-[ferredoxin] + 2 ADP + 2 phosphate = protochlorophyllide a + reduced 2[4Fe-4S]-[ferredoxin] + 2 ATP + 2 H2O. It functions in the pathway porphyrin-containing compound metabolism; chlorophyll biosynthesis (light-independent). Component of the dark-operative protochlorophyllide reductase (DPOR) that uses Mg-ATP and reduced ferredoxin to reduce ring D of protochlorophyllide (Pchlide) to form chlorophyllide a (Chlide). This reaction is light-independent. The L component serves as a unique electron donor to the NB-component of the complex, and binds Mg-ATP. The protein is Light-independent protochlorophyllide reductase iron-sulfur ATP-binding protein of Thermosynechococcus vestitus (strain NIES-2133 / IAM M-273 / BP-1).